Here is a 388-residue protein sequence, read N- to C-terminus: Chorismate synthase (388 aa).

Arg-39 and Arg-45 together coordinate NADP(+). FMN-binding positions include 130-132, 251-252, Gly-296, 311-315, and Arg-337; these read RSS, NA, and KPIPT.

The protein belongs to the chorismate synthase family. As to quaternary structure, homotetramer. Requires FMNH2 as cofactor.

The catalysed reaction is 5-O-(1-carboxyvinyl)-3-phosphoshikimate = chorismate + phosphate. The protein operates within metabolic intermediate biosynthesis; chorismate biosynthesis; chorismate from D-erythrose 4-phosphate and phosphoenolpyruvate: step 7/7. Catalyzes the anti-1,4-elimination of the C-3 phosphate and the C-6 proR hydrogen from 5-enolpyruvylshikimate-3-phosphate (EPSP) to yield chorismate, which is the branch point compound that serves as the starting substrate for the three terminal pathways of aromatic amino acid biosynthesis. This reaction introduces a second double bond into the aromatic ring system. This is Chorismate synthase from Streptococcus pyogenes serotype M12 (strain MGAS2096).